A 259-amino-acid chain; its full sequence is DNA repair protein RecO (259 aa).

Belongs to the RecO family.

Involved in DNA repair and RecF pathway recombination. The protein is DNA repair protein RecO of Chloroherpeton thalassium (strain ATCC 35110 / GB-78).